The chain runs to 432 residues: RING finger protein 44 (432 aa).

The disordered stretch occupies residues 1 to 86; sequence MRPWALAVTR…GGSPRMLHPA (86 aa). Positions 56–65 are enriched in pro residues; the sequence is QQPPSRPPHL. Residues 380–421 form an RING-type; atypical zinc finger; it reads CVVCFSDFEARQLLRVLPCNHEFHTKCVDKWLKANRTCPICR.

This is RING finger protein 44 (RNF44) from Homo sapiens (Human).